The sequence spans 597 residues: Arginine--tRNA ligase (597 aa).

The short motif at 138 to 148 (ANPTGPMHVGH) is the 'HIGH' region element.

Belongs to the class-I aminoacyl-tRNA synthetase family. Monomer.

The protein resides in the cytoplasm. It catalyses the reaction tRNA(Arg) + L-arginine + ATP = L-arginyl-tRNA(Arg) + AMP + diphosphate. This Nitrobacter winogradskyi (strain ATCC 25391 / DSM 10237 / CIP 104748 / NCIMB 11846 / Nb-255) protein is Arginine--tRNA ligase.